We begin with the raw amino-acid sequence, 340 residues long: Ketol-acid reductoisomerase (NADP(+)) (340 aa).

Positions 1-182 (MRVYYDRDCD…GGGRSGIIET (182 aa)) constitute a KARI N-terminal Rossmann domain. NADP(+)-binding positions include 24 to 27 (YGSQ), R48, S51, S53, and 83 to 86 (DELQ). H108 is an active-site residue. G134 contributes to the NADP(+) binding site. The KARI C-terminal knotted domain maps to 183–329 (NFREECETDL…ETLRGMMPWI (147 aa)). Mg(2+)-binding residues include D191, E195, E227, and E231. S252 is a binding site for substrate.

It belongs to the ketol-acid reductoisomerase family. It depends on Mg(2+) as a cofactor.

It carries out the reaction (2R)-2,3-dihydroxy-3-methylbutanoate + NADP(+) = (2S)-2-acetolactate + NADPH + H(+). It catalyses the reaction (2R,3R)-2,3-dihydroxy-3-methylpentanoate + NADP(+) = (S)-2-ethyl-2-hydroxy-3-oxobutanoate + NADPH + H(+). The protein operates within amino-acid biosynthesis; L-isoleucine biosynthesis; L-isoleucine from 2-oxobutanoate: step 2/4. It participates in amino-acid biosynthesis; L-valine biosynthesis; L-valine from pyruvate: step 2/4. Functionally, involved in the biosynthesis of branched-chain amino acids (BCAA). Catalyzes an alkyl-migration followed by a ketol-acid reduction of (S)-2-acetolactate (S2AL) to yield (R)-2,3-dihydroxy-isovalerate. In the isomerase reaction, S2AL is rearranged via a Mg-dependent methyl migration to produce 3-hydroxy-3-methyl-2-ketobutyrate (HMKB). In the reductase reaction, this 2-ketoacid undergoes a metal-dependent reduction by NADPH to yield (R)-2,3-dihydroxy-isovalerate. The sequence is that of Ketol-acid reductoisomerase (NADP(+)) from Roseobacter denitrificans (strain ATCC 33942 / OCh 114) (Erythrobacter sp. (strain OCh 114)).